Consider the following 236-residue polypeptide: Phosphoribosylaminoimidazole-succinocarboxamide synthase (236 aa).

This sequence belongs to the SAICAR synthetase family.

The enzyme catalyses 5-amino-1-(5-phospho-D-ribosyl)imidazole-4-carboxylate + L-aspartate + ATP = (2S)-2-[5-amino-1-(5-phospho-beta-D-ribosyl)imidazole-4-carboxamido]succinate + ADP + phosphate + 2 H(+). Its pathway is purine metabolism; IMP biosynthesis via de novo pathway; 5-amino-1-(5-phospho-D-ribosyl)imidazole-4-carboxamide from 5-amino-1-(5-phospho-D-ribosyl)imidazole-4-carboxylate: step 1/2. The polypeptide is Phosphoribosylaminoimidazole-succinocarboxamide synthase (Pseudomonas putida (strain W619)).